Reading from the N-terminus, the 570-residue chain is Proline--tRNA ligase (570 aa).

Belongs to the class-II aminoacyl-tRNA synthetase family. ProS type 1 subfamily. Homodimer.

The protein resides in the cytoplasm. The enzyme catalyses tRNA(Pro) + L-proline + ATP = L-prolyl-tRNA(Pro) + AMP + diphosphate. In terms of biological role, catalyzes the attachment of proline to tRNA(Pro) in a two-step reaction: proline is first activated by ATP to form Pro-AMP and then transferred to the acceptor end of tRNA(Pro). As ProRS can inadvertently accommodate and process non-cognate amino acids such as alanine and cysteine, to avoid such errors it has two additional distinct editing activities against alanine. One activity is designated as 'pretransfer' editing and involves the tRNA(Pro)-independent hydrolysis of activated Ala-AMP. The other activity is designated 'posttransfer' editing and involves deacylation of mischarged Ala-tRNA(Pro). The misacylated Cys-tRNA(Pro) is not edited by ProRS. The polypeptide is Proline--tRNA ligase (Shewanella sp. (strain MR-4)).